Consider the following 128-residue polypeptide: Modulator protein MzrA (128 aa).

At 1 to 11 (MMVMKRPSLRQ) the chain is on the cytoplasmic side. Residues 12 to 32 (FSWLLGGSLLLGALFWLWLAV) form a helical membrane-spanning segment. The Periplasmic portion of the chain corresponds to 33–128 (QQQEATLAIR…RLRDAPHRLG (96 aa)).

It belongs to the MzrA family. In terms of assembly, interacts with EnvZ.

It is found in the cell inner membrane. Functionally, modulates the activity of the EnvZ/OmpR two-component regulatory system, probably by directly modulating EnvZ enzymatic activity and increasing stability of phosphorylated OmpR. This chain is Modulator protein MzrA, found in Klebsiella pneumoniae subsp. pneumoniae (strain ATCC 700721 / MGH 78578).